We begin with the raw amino-acid sequence, 252 residues long: MGRGRVELKRIENKINRQVTFSKRRNGLLKKAYELSVLCEAEVALIIFSSRGKLYEFGSAGITKTLERYQRCCLNPQDNCGERETQSWYQEVSKLKAKFEALQRTQRHLLGEDLGALSVKELQNLEKQLEGALAQARQRKTQIMMEQMEELRRKERHLGDVNKQLKIKVSLELSSFEGEGQGVPFPWSNCNASLDEAGSSTFHVHHSQSNHMDCDLPDPVLQIGYHQYMAADGASGSRNMAVESNIIHGWGL.

Positions 1-61 constitute an MADS-box domain; the sequence is MGRGRVELKR…GKLYEFGSAG (61 aa). Short sequence motifs (nuclear localization signal) lie at residues 8 to 15 and 138 to 145; these read LKRIENKI and QRKTQIMM. The region spanning 85 to 175 is the K-box domain; it reads TQSWYQEVSK…KIKVSLELSS (91 aa).

As to expression, restricted to flowers.

Its subcellular location is the nucleus. Probable transcription factor involved in fruit development. Key regulator of the transition between the state of 'ovary arrest' imposed towards anthesis and the fertilization-triggered fruit set. This Solanum lycopersicum (Tomato) protein is Protein AGAMOUS-LIKE 6.